The chain runs to 365 residues: tRNA/tmRNA (uracil-C(5))-methyltransferase (365 aa).

The S-adenosyl-L-methionine site is built by Gln189, Tyr217, Asn222, Glu238, and Asp298. The Nucleophile role is filled by Cys323. The active-site Proton acceptor is the Glu357.

This sequence belongs to the class I-like SAM-binding methyltransferase superfamily. RNA M5U methyltransferase family. TrmA subfamily.

It carries out the reaction uridine(54) in tRNA + S-adenosyl-L-methionine = 5-methyluridine(54) in tRNA + S-adenosyl-L-homocysteine + H(+). The catalysed reaction is uridine(341) in tmRNA + S-adenosyl-L-methionine = 5-methyluridine(341) in tmRNA + S-adenosyl-L-homocysteine + H(+). Functionally, dual-specificity methyltransferase that catalyzes the formation of 5-methyluridine at position 54 (m5U54) in all tRNAs, and that of position 341 (m5U341) in tmRNA (transfer-mRNA). This is tRNA/tmRNA (uracil-C(5))-methyltransferase from Pseudoalteromonas atlantica (strain T6c / ATCC BAA-1087).